Consider the following 151-residue polypeptide: Ribosome maturation factor RimP (151 aa).

This sequence belongs to the RimP family.

The protein localises to the cytoplasm. In terms of biological role, required for maturation of 30S ribosomal subunits. The protein is Ribosome maturation factor RimP of Endomicrobium trichonymphae.